A 378-amino-acid polypeptide reads, in one-letter code: Myoglobin (378 aa).

Position 2 is a blocked amino end (Ala) (Ala2). Position 332 (His332) interacts with heme.

The protein belongs to the indoleamine 2,3-dioxygenase family. Homodimer. The cofactor is heme.

Functionally, serves a reserve supply of oxygen and facilitates the movement of oxygen within muscles. This is Myoglobin from Haliotis diversicolor (Abalone).